The sequence spans 324 residues: Glyoxylate/hydroxypyruvate reductase B (324 aa).

Active-site residues include Arg237 and Glu266. Catalysis depends on His285, which acts as the Proton donor.

It belongs to the D-isomer specific 2-hydroxyacid dehydrogenase family. GhrB subfamily. As to quaternary structure, homodimer.

Its subcellular location is the cytoplasm. It catalyses the reaction glycolate + NADP(+) = glyoxylate + NADPH + H(+). The enzyme catalyses (R)-glycerate + NAD(+) = 3-hydroxypyruvate + NADH + H(+). The catalysed reaction is (R)-glycerate + NADP(+) = 3-hydroxypyruvate + NADPH + H(+). In terms of biological role, catalyzes the NADPH-dependent reduction of glyoxylate and hydroxypyruvate into glycolate and glycerate, respectively. The protein is Glyoxylate/hydroxypyruvate reductase B of Shigella dysenteriae serotype 1 (strain Sd197).